Here is a 245-residue protein sequence, read N- to C-terminus: Phycocyanobilin:ferredoxin oxidoreductase (245 aa).

It belongs to the HY2 family.

It catalyses the reaction (2R,3Z)-phycocyanobilin + 4 oxidized [2Fe-2S]-[ferredoxin] = biliverdin IXalpha + 4 reduced [2Fe-2S]-[ferredoxin] + 4 H(+). Its function is as follows. Catalyzes the four-electron reduction of biliverdin IX-alpha (2-electron reduction at both the A and D rings); the reaction proceeds via an isolatable 2-electron intermediate, 181,182-dihydrobiliverdin. This Trichormus variabilis (strain ATCC 29413 / PCC 7937) (Anabaena variabilis) protein is Phycocyanobilin:ferredoxin oxidoreductase.